Here is a 75-residue protein sequence, read N- to C-terminus: RNA-binding protein KhpA (75 aa).

Positions 29–75 (SIIIELKVAPEDMGKVIGKQGRIAQAIRTLVKAAALKEKKRVIVEII) constitute a KH domain.

Belongs to the KhpA RNA-binding protein family. Forms a complex with KhpB.

Its subcellular location is the cytoplasm. Its function is as follows. A probable RNA chaperone. Forms a complex with KhpB which binds to cellular RNA and controls its expression. Plays a role in peptidoglycan (PG) homeostasis and cell length regulation. This chain is RNA-binding protein KhpA, found in Caldanaerobacter subterraneus subsp. tengcongensis (strain DSM 15242 / JCM 11007 / NBRC 100824 / MB4) (Thermoanaerobacter tengcongensis).